The sequence spans 373 residues: 3 beta-hydroxysteroid dehydrogenase/Delta 5--&gt;4-isomerase type 1 (373 aa).

NADP(+) contacts are provided by residues 10-15 (GAGGFL), tyrosine 155, and lysine 159. Lysine 159 acts as the Proton donor in catalysis. The helical transmembrane segment at 288 to 308 (VALLYWLGFLLELVSFLLRPV) threads the bilayer.

The protein belongs to the 3-beta-HSD family. In terms of tissue distribution, high levels in adrenal gland, kidney and male liver. Low levels in female liver.

Its subcellular location is the endoplasmic reticulum membrane. The protein resides in the mitochondrion membrane. It carries out the reaction a 3beta-hydroxy-Delta(5)-steroid + NAD(+) = a 3-oxo-Delta(5)-steroid + NADH + H(+). It catalyses the reaction pregnenolone + NAD(+) = pregn-5-ene-3,20-dione + NADH + H(+). The catalysed reaction is 3beta-hydroxyandrost-5-en-17-one + NAD(+) = androst-5-ene-3,17-dione + NADH + H(+). The enzyme catalyses androst-5-en-3beta,17beta-diol + NAD(+) = 17beta-hydroxy-androst-5-en-3-one + NADH + H(+). It carries out the reaction a 3beta-hydroxysteroid + NADP(+) = a 3-oxosteroid + NADPH + H(+). It catalyses the reaction 5alpha-androstane-3beta,17beta-diol + NADP(+) = 17beta-hydroxy-5alpha-androstan-3-one + NADPH + H(+). The catalysed reaction is 3beta-hydroxy-5alpha-androstan-17-one + NADP(+) = 5alpha-androstan-3,17-dione + NADPH + H(+). The enzyme catalyses a 3-oxo-Delta(5)-steroid = a 3-oxo-Delta(4)-steroid. It carries out the reaction pregn-5-ene-3,20-dione = progesterone. It catalyses the reaction androst-5-ene-3,17-dione = androst-4-ene-3,17-dione. The catalysed reaction is 17beta-hydroxy-androst-5-en-3-one = testosterone. The enzyme catalyses 5alpha-androstane-3beta,17beta-diol + NAD(+) = 17beta-hydroxy-5alpha-androstan-3-one + NADH + H(+). Its pathway is steroid hormone biosynthesis. It functions in the pathway steroid metabolism. A bifunctional enzyme responsible for the oxidation and isomerization of 3beta-hydroxy-Delta(5)-steroid precursors to 3-oxo-Delta(4)-steroids, an essential step in steroid hormone biosynthesis. Specifically catalyzes the conversion of pregnenolone to progesterone, 17alpha-hydroxypregnenolone to 17alpha-hydroxyprogesterone, dehydroepiandrosterone (DHEA) to 4-androstenedione, and androstenediol to testosterone. Additionally, catalyzes the interconversion between 3beta-hydroxy and 3-oxo-5alpha-androstane steroids controlling the bioavalability of the active forms. Specifically converts dihydrotestosterone to its inactive form 5alpha-androstanediol, that does not bind androgen receptor/AR. Also converts androstanedione, a precursor of testosterone and estrone, to epiandrosterone. Expected to use NAD(+) as preferred electron donor for the 3-beta-hydroxy-steroid dehydrogenase activity and NADPH for the 3-ketosteroid reductase activity. In Mesocricetus auratus (Golden hamster), this protein is 3 beta-hydroxysteroid dehydrogenase/Delta 5--&gt;4-isomerase type 1 (HSD3B1).